Here is a 211-residue protein sequence, read N- to C-terminus: SAGA-associated factor 11 homolog 2 (211 aa).

The SGF11-type zinc-finger motif lies at 115–136 (CTCPNCDRLVAAARFAPHLEKC). The disordered stretch occupies residues 149–211 (RRLATKEGSS…GSKKNNGKTF (63 aa)). Residues 157 to 166 (SSASTSSTST) are compositionally biased toward low complexity. Serine 187 is subject to Phosphoserine. A compositionally biased stretch (low complexity) spans 197-211 (SSRNNGSKKNNGKTF).

Belongs to the SGF11 family. Component of some SAGA transcription coactivator-HAT complexes, at least composed of Ada2b, not/nonstop, Pcaf/Gcn5, Sgf11 and Spt3. Within the SAGA complex, Sgf11, e(y)2, and not/nonstop form an additional subcomplex of SAGA called the DUB module (deubiquitination module). Interacts directly with not/nonstop. Interacts with the AMEX complex component xmas-2. Interacts with Cbp80; important for promoter recruitment of Sgf11 that is not associated with the DUB module.

The protein localises to the nucleus. It is found in the nucleoplasm. It localises to the cytoplasm. In terms of biological role, component of the transcription regulatory histone acetylation (HAT) complex SAGA, a multiprotein complex that activates transcription by remodeling chromatin and mediating histone acetylation and deubiquitination. Within the SAGA complex, participates in a subcomplex that specifically deubiquitinates histone H2B. The SAGA complex is recruited to specific gene promoters by activators, where it is required for transcription. Required for nuclear receptor-mediated transactivation. Binds independently on SAGA to promoters in an RNA-dependent manner. Binds to mRNA and is essential for total mRNA export from the nucleus. Required to counteract heterochromatin silencing. Controls the development of neuronal connectivity in visual system by being required for accurate axon targeting in the optic lobe. Required for expression of ecdysone-induced genes such as br/broad. This chain is SAGA-associated factor 11 homolog 2, found in Drosophila grimshawi (Hawaiian fruit fly).